The sequence spans 337 residues: Inositol 2-dehydrogenase (337 aa).

This sequence belongs to the Gfo/Idh/MocA family. In terms of assembly, homotetramer.

It carries out the reaction myo-inositol + NAD(+) = scyllo-inosose + NADH + H(+). Functionally, involved in the oxidation of myo-inositol (MI) to 2-keto-myo-inositol (2KMI or 2-inosose). This chain is Inositol 2-dehydrogenase, found in Burkholderia multivorans (strain ATCC 17616 / 249).